A 718-amino-acid chain; its full sequence is MAHLLGSQACMDSLRKDLTDLQGTIVDVFSRAGPVRFPSWKFPDRVACDLDMVALLEHYDHVPGDPEFTQLSHAVLLELVIDRLLLLLQSCASYLENLSVEQMMPPARAAGPCMSVGLTVRRFWSNLLRLGLLYQQAVPQKRANQGEISITKPTAKGEPARSPECMTAKFIKPPSPVPGLPLICQGLQSIPVRVSLRSPGGTSEKTKSVYSQTVETALVPCDACTSVQGSLWEVGKVVISLCQSQNLPSSLGQFQKLVKDSLGLKPLPAATVGHWAAEQSKDLTRLNKHVGALTQLVGPLRAQLEDAEGQKDGLRKQVSKLEQALQQEQGQRQRQTEEAERTLAKCEHDRHQLLTETCDLKTKVAVLEGDLKQQQKSIQAMEAKAQQLEEEGERRAAAERQVQQLEEQVQLLAGRLDGASQQIRWASTELDKEKARVDSMVRHQESLQAKQRTLLQQLDCLDQEREELRGSLDEAEAQRSELEEQLQSLQSDREQEQCQLQAQQELLQSLQQEKQDLEQVTTDLQLTISELRQQLEELKERERLLVAFPDLHQPEEAQIQSSSNVTQDMERQVQANAIRIQVLQEENKRLQSMLTKIREVAQQGGLKMVPQGQLWSPPYKGIQGATPPAQAQSAFSGLTGRRQSPGSRTSSTGRTHPGGLRTSPSRQPGGLPSKFSLGDGSHSASCTQNPIRALARLRRKLSPNRQAGSTYQPQERPT.

Residues 300–603 (LRAQLEDAEG…LTKIREVAQQ (304 aa)) are a coiled coil. Over residues 469–482 (RGSLDEAEAQRSEL) the composition is skewed to basic and acidic residues. Disordered regions lie at residues 469-490 (RGSLDEAEAQRSELEEQLQSLQ) and 617-690 (PPYK…TQNP). Low complexity predominate over residues 639-659 (TGRRQSPGSRTSSTGRTHPGG).

This Mus musculus (Mouse) protein is Coiled-coil domain-containing protein 157 (Ccdc157).